The sequence spans 117 residues: Large ribosomal subunit protein uL18 (117 aa).

It belongs to the universal ribosomal protein uL18 family. As to quaternary structure, part of the 50S ribosomal subunit; part of the 5S rRNA/L5/L18/L25 subcomplex. Contacts the 5S and 23S rRNAs.

This is one of the proteins that bind and probably mediate the attachment of the 5S RNA into the large ribosomal subunit, where it forms part of the central protuberance. This is Large ribosomal subunit protein uL18 from Aliivibrio salmonicida (strain LFI1238) (Vibrio salmonicida (strain LFI1238)).